The primary structure comprises 179 residues: Protein GrpE (179 aa).

The segment covering 1–14 (MSKKDKKEEIKEEV) has biased composition (basic and acidic residues). The tract at residues 1–40 (MSKKDKKEEIKEEVEATEPTTEESVEEVAEETSENKELQE) is disordered. A compositionally biased stretch (acidic residues) spans 15-32 (EATEPTTEESVEEVAEET).

Belongs to the GrpE family. Homodimer.

The protein resides in the cytoplasm. Functionally, participates actively in the response to hyperosmotic and heat shock by preventing the aggregation of stress-denatured proteins, in association with DnaK and GrpE. It is the nucleotide exchange factor for DnaK and may function as a thermosensor. Unfolded proteins bind initially to DnaJ; upon interaction with the DnaJ-bound protein, DnaK hydrolyzes its bound ATP, resulting in the formation of a stable complex. GrpE releases ADP from DnaK; ATP binding to DnaK triggers the release of the substrate protein, thus completing the reaction cycle. Several rounds of ATP-dependent interactions between DnaJ, DnaK and GrpE are required for fully efficient folding. This Streptococcus mutans serotype c (strain ATCC 700610 / UA159) protein is Protein GrpE.